The sequence spans 1124 residues: uncharacterized protein (1124 aa).

The first 28 residues, 1–28, serve as a signal peptide directing secretion; that stretch reads MALFPRSILIALVLSFVLNLGLVTKIHA. 7 consecutive transmembrane segments (helical) span residues 332–352, 359–379, 393–413, 495–515, 522–542, 555–575, and 700–720; these read IVTA…LLAG, EYIN…GINI, MIQW…SWVM, MLVS…AFMV, MISI…FLFA, MISF…MFAV, and IKNI…MYNF.

It belongs to the TrbL/VirB6 family.

The protein localises to the cell membrane. This is an uncharacterized protein from Rickettsia prowazekii (strain Madrid E).